The sequence spans 515 residues: Maturase K (515 aa).

It belongs to the intron maturase 2 family. MatK subfamily.

The protein localises to the plastid. The protein resides in the chloroplast. Its function is as follows. Usually encoded in the trnK tRNA gene intron. Probably assists in splicing its own and other chloroplast group II introns. This chain is Maturase K, found in Pinus sibirica (Siberian pine).